The primary structure comprises 426 residues: Serine hydroxymethyltransferase (426 aa).

(6S)-5,6,7,8-tetrahydrofolate is bound by residues leucine 115 and 119–121 (GHI). The residue at position 225 (lysine 225) is an N6-(pyridoxal phosphate)lysine.

It belongs to the SHMT family. Homodimer. Pyridoxal 5'-phosphate serves as cofactor.

The protein localises to the cytoplasm. It participates in amino-acid biosynthesis; glycine biosynthesis; glycine from L-serine: step 1/1. Its function is as follows. Catalyzes the reversible interconversion of serine and glycine with a modified folate serving as the one-carbon carrier. Also exhibits a pteridine-independent aldolase activity toward beta-hydroxyamino acids, producing glycine and aldehydes, via a retro-aldol mechanism. This is Serine hydroxymethyltransferase from Thermoplasma acidophilum (strain ATCC 25905 / DSM 1728 / JCM 9062 / NBRC 15155 / AMRC-C165).